The sequence spans 465 residues: 3-isopropylmalate dehydratase large subunit (465 aa).

3 residues coordinate [4Fe-4S] cluster: cysteine 347, cysteine 407, and cysteine 410.

It belongs to the aconitase/IPM isomerase family. LeuC type 1 subfamily. As to quaternary structure, heterodimer of LeuC and LeuD. It depends on [4Fe-4S] cluster as a cofactor.

The catalysed reaction is (2R,3S)-3-isopropylmalate = (2S)-2-isopropylmalate. It participates in amino-acid biosynthesis; L-leucine biosynthesis; L-leucine from 3-methyl-2-oxobutanoate: step 2/4. In terms of biological role, catalyzes the isomerization between 2-isopropylmalate and 3-isopropylmalate, via the formation of 2-isopropylmaleate. The protein is 3-isopropylmalate dehydratase large subunit of Tolumonas auensis (strain DSM 9187 / NBRC 110442 / TA 4).